We begin with the raw amino-acid sequence, 160 residues long: Small RNA binding protein 1 (160 aa).

Residues 8 to 86 (FRCFVGGLAW…RNITVNEAQQ (79 aa)) form the RRM domain. The tract at residues 82-160 (NEAQQRGGGG…GGGSEGGWRN (79 aa)) is disordered. A compositionally biased stretch (gly residues) spans 87–160 (RGGGGGGGYN…GGGSEGGWRN (74 aa)). Residues 88–157 (GGGGGGGYNR…GSGGGGSEGG (70 aa)) are glycine-rich (GR) required for cell-to-cell movement.

This sequence belongs to the GR-RBP family. As to quaternary structure, binds to small phloem-mobile single-stranded RNAs (ss-sRNA, e.g. small interfering RNA (siRNA) and microRNA (miRNA)) in the phloeme exudate, including viral-derived sRNA (vsiRNA). In terms of tissue distribution, accumulates in phloem exudates.

It localises to the secreted. In terms of biological role, possibly has a role in RNA transcription or processing during stress. Binds sequence non-specifically to RNAs and DNAs. Mediates cell-to-cell trafficking of RNA interference (RNAi) signals (small RNAs (sRNA), e.g. small interfering RNA (siRNA) and microRNA (miRNA)) which regulate growth and development, as well as responses to environmental inputs, including pathogen attack; can compromise zucchini yellow mosaic virus (ZYMV) and tobacco rattle virus (TRV) infections at the early stage. The polypeptide is Small RNA binding protein 1 (Cucumis sativus (Cucumber)).